A 99-amino-acid chain; its full sequence is UPF0213 protein RBAM_000440 (99 aa).

In terms of domain architecture, GIY-YIG spans 4–79 (NSHFFYVLLC…KQLTRKKKEQ (76 aa)).

The protein belongs to the UPF0213 family.

This is UPF0213 protein RBAM_000440 from Bacillus velezensis (strain DSM 23117 / BGSC 10A6 / LMG 26770 / FZB42) (Bacillus amyloliquefaciens subsp. plantarum).